Consider the following 577-residue polypeptide: Zinc finger-containing ubiquitin peptidase 1 (577 aa).

Residues Leu-2–His-24 form a C2H2-type 1 zinc finger. A C2H2-type 2; atypical zinc finger spans residues Ile-29–His-52. Residues Glu-124 to Gly-137 are compositionally biased toward basic and acidic residues. Residues Glu-124–Ile-145 are disordered. The segment at Pro-153–His-176 adopts a C2H2-type 3; atypical zinc-finger fold. Residues Tyr-192–His-214 form a C2H2-type 4 zinc finger. Residues Asp-225–Arg-247 are MIU. The disordered stretch occupies residues Arg-238–Gln-260. The zUBD/ZHA stretch occupies residues Lys-248–Gly-273. Lys-261 bears the N6-acetyllysine mark. Cys-359 functions as the Nucleophile in the catalytic mechanism. His-490 serves as the catalytic Proton acceptor. Asp-511 is a catalytic residue.

The protein belongs to the peptidase C78 family. ZUFSP subfamily. As to quaternary structure, interacts with RPA1 and RPA2.

It localises to the cytoplasm. Its subcellular location is the nucleus. It carries out the reaction Thiol-dependent hydrolysis of ester, thioester, amide, peptide and isopeptide bonds formed by the C-terminal Gly of ubiquitin (a 76-residue protein attached to proteins as an intracellular targeting signal).. Its function is as follows. Deubiquitinase with endodeubiquitinase activity that specifically interacts with and cleaves 'Lys-63'-linked long polyubiquitin chains. Shows only weak activity against 'Lys-11' and 'Lys-48'-linked chains. Plays an important role in genome stability pathways, functioning to prevent spontaneous DNA damage and also promote cellular survival in response to exogenous DNA damage. Modulates the ubiquitination status of replication protein A (RPA) complex proteins in response to replication stress. The sequence is that of Zinc finger-containing ubiquitin peptidase 1 from Mus musculus (Mouse).